A 436-amino-acid polypeptide reads, in one-letter code: Protein translocase subunit SecY (436 aa).

8 consecutive transmembrane segments (helical) span residues 17–37 (ILLT…PVPY), 72–92 (FGLL…IQLL), 122–142 (TFFW…EVIF), 146–166 (LQVY…VLWF), 209–229 (FSNI…CIYI), 269–289 (VMPL…FEII), 309–329 (ISYW…IFFF), and 380–400 (IFLI…NLNI).

It belongs to the SecY/SEC61-alpha family. As to quaternary structure, component of the plastid Sec protein translocase complex, which is composed of at least SecY and SecE.

The protein localises to the plastid. It localises to the chloroplast thylakoid membrane. Functionally, the central subunit of the protein translocation channel SecYE. Consists of two halves. These two domains form a lateral gate at the front which open onto the bilayer between TMs 2 and 7, and are clamped together by SecE at the back. The channel is closed by both a pore ring composed of hydrophobic SecY resides and a short helix (helix 2A) on the extracellular side of the membrane which forms a plug. The sequence is that of Protein translocase subunit SecY from Vaucheria litorea (Yellow-green alga).